Here is a 408-residue protein sequence, read N- to C-terminus: UDP-glucose 4-epimerase 2 (408 aa).

13 to 44 serves as a coordination point for NAD(+); that stretch reads TVLVTGGAGYIGSHAVLQLLLAGFRAVVVDNL. Residue Ser-138 coordinates substrate. Tyr-162 serves as the catalytic Proton acceptor. The segment at 369 to 408 is disordered; sequence GSPKQNGHCTNGFSESTRHNGHNGYGLVDSAKHNGNGHFH. Residues 370–383 show a composition bias toward polar residues; that stretch reads SPKQNGHCTNGFSE.

The protein belongs to the NAD(P)-dependent epimerase/dehydratase family. NAD(+) is required as a cofactor.

It carries out the reaction UDP-alpha-D-glucose = UDP-alpha-D-galactose. The protein operates within carbohydrate metabolism; galactose metabolism. Functionally, catalyzes the interconversion between UDP-glucose and UDP-galactose. The protein is UDP-glucose 4-epimerase 2 (UGE-2) of Oryza sativa subsp. japonica (Rice).